We begin with the raw amino-acid sequence, 367 residues long: Probable dual-specificity RNA methyltransferase RlmN (367 aa).

Glu92 acts as the Proton acceptor in catalysis. In terms of domain architecture, Radical SAM core spans 98 to 326 (QEYGLSVCVT…YDTLKKNGIN (229 aa)). Residues Cys105 and Cys341 are joined by a disulfide bond. [4Fe-4S] cluster-binding residues include Cys112, Cys116, and Cys119. S-adenosyl-L-methionine is bound by residues 164–165 (GE), Ser196, 219–221 (SLH), and Asn297. Cys341 acts as the S-methylcysteine intermediate in catalysis.

It belongs to the radical SAM superfamily. RlmN family. [4Fe-4S] cluster serves as cofactor.

The protein resides in the cytoplasm. It carries out the reaction adenosine(2503) in 23S rRNA + 2 reduced [2Fe-2S]-[ferredoxin] + 2 S-adenosyl-L-methionine = 2-methyladenosine(2503) in 23S rRNA + 5'-deoxyadenosine + L-methionine + 2 oxidized [2Fe-2S]-[ferredoxin] + S-adenosyl-L-homocysteine. The catalysed reaction is adenosine(37) in tRNA + 2 reduced [2Fe-2S]-[ferredoxin] + 2 S-adenosyl-L-methionine = 2-methyladenosine(37) in tRNA + 5'-deoxyadenosine + L-methionine + 2 oxidized [2Fe-2S]-[ferredoxin] + S-adenosyl-L-homocysteine. Specifically methylates position 2 of adenine 2503 in 23S rRNA and position 2 of adenine 37 in tRNAs. This Listeria innocua serovar 6a (strain ATCC BAA-680 / CLIP 11262) protein is Probable dual-specificity RNA methyltransferase RlmN.